Consider the following 198-residue polypeptide: dITP/XTP pyrophosphatase (198 aa).

Position 9–14 (serine 9–lysine 14) interacts with substrate. Residues aspartate 41 and aspartate 70 each coordinate Mg(2+). The active-site Proton acceptor is the aspartate 70. Substrate-binding positions include serine 71, phenylalanine 153–aspartate 156, lysine 176, and histidine 181–arginine 182.

It belongs to the HAM1 NTPase family. In terms of assembly, homodimer. Mg(2+) serves as cofactor.

The enzyme catalyses XTP + H2O = XMP + diphosphate + H(+). It carries out the reaction dITP + H2O = dIMP + diphosphate + H(+). It catalyses the reaction ITP + H2O = IMP + diphosphate + H(+). In terms of biological role, pyrophosphatase that catalyzes the hydrolysis of nucleoside triphosphates to their monophosphate derivatives, with a high preference for the non-canonical purine nucleotides XTP (xanthosine triphosphate), dITP (deoxyinosine triphosphate) and ITP. Seems to function as a house-cleaning enzyme that removes non-canonical purine nucleotides from the nucleotide pool, thus preventing their incorporation into DNA/RNA and avoiding chromosomal lesions. This is dITP/XTP pyrophosphatase from Aromatoleum aromaticum (strain DSM 19018 / LMG 30748 / EbN1) (Azoarcus sp. (strain EbN1)).